A 557-amino-acid chain; its full sequence is MSTSSQTIDVDALLDFSACDGSYNSPSLSPSTASKPTFASPVTAAVSTPSLPSTTQTLSGPSHNYDMYRQQTGFVPGALTNTMAVNQTNNTGYQDFGSLDYLSSFSPENDVFDFNASPSQGTMEMEFESPADSQFFPTVNPSSIQHDTSALSQTSSVGRLWPGAHSQAALAKAQAQQRQQQQQQQLIQQTQRQTSPKSRGKAPQPTDPIVEQKITQLLNSMRAKPASNEPESQSVLNNLPKSKKDEEEMDEDERLLASEEGKKLSSKERRQLRNKVSARAFRSRRKEYISQLEAEIANKVNENGDLRSQNRALMDENKRLSDLTRMLLSSPSFSTFLDNLSANPTGLPQGSPVKIEQNPQQEQNQVPKDVNAYNSQFSSQQQIGMAMIPEQTMDFSLLSLGNTYNFQPQVFVVDTPEVPNAIDASVLSGKTSNFVEESFSSDDEKVEVPVIERPLKTKAIETPEAPVDEEFESDPEFALFHSEPATTTTTPKDIDTENLTGIDLFGGIESEKMFARYELVNATEEEATAAFAMARVQRISASIDSVVSRLELLTMDI.

A compositionally biased stretch (low complexity) spans A171–T194. Disordered regions lie at residues A171–I209 and M221–R273. Residues E229 to P240 show a composition bias toward polar residues. Basic and acidic residues predominate over residues R254 to Q271. The 64-residue stretch at L264 to L327 folds into the bZIP domain. Positions K267–K286 are basic motif. A leucine-zipper region spans residues I289–I296. Residues P344–N364 are disordered.

The protein resides in the nucleus. Its function is as follows. BZIP-type transcription factor that functions as either an activator or a suppressor, and which contributes to the regulation of fungal growth, conidiation, cell wall integrity, and virulence. Plays a key role in virulence against insects by mediating cell wall integrity, cell surface hydrophobicity, and adherence to hydrophobic surfaces. Exhibits negative regulation of subtilisin proteases, but positive control of an adhesin gene. The protein is BZIP-type transcription factor MBZ1 of Metarhizium robertsii (strain ARSEF 23 / ATCC MYA-3075) (Metarhizium anisopliae (strain ARSEF 23)).